Consider the following 632-residue polypeptide: FAD-binding monooxygenase ausB (632 aa).

Residues 1 to 50 (MASAPEVESVKTPDPASTKTQHTSIAEIHTADQTWNNESNTRLPPNHRHH) are disordered. Polar residues-rich tracts occupy residues 15–24 (PASTKTQHTS) and 31–43 (ADQT…NTRL). FAD-binding positions include 116–119 (TWYW), 128–129 (DI), and Y134. Position 126–128 (126–128 (MCD)) interacts with NADP(+). NADP(+) contacts are provided by residues 269 to 275 (TGSTAIQ) and 292 to 293 (RT).

The protein belongs to the FAD-binding monooxygenase family. FAD is required as a cofactor.

The enzyme catalyses protoaustinoid A + AH2 + O2 = berkeleyone A + A + H2O. It participates in secondary metabolite biosynthesis; terpenoid biosynthesis. FAD-binding monooxygenase; part of the gene cluster that mediates the biosynthesis of calidodehydroaustin, a fungal meroterpenoid. The first step of the pathway is the synthesis of 3,5-dimethylorsellinic acid by the polyketide synthase ausA. 3,5-dimethylorsellinic acid is then prenylated by the polyprenyl transferase ausN. Further epoxidation by the FAD-dependent monooxygenase ausM and cyclization by the probable terpene cyclase ausL lead to the formation of protoaustinoid A. Protoaustinoid A is then oxidized to spiro-lactone preaustinoid A3 by the combined action of the FAD-binding monooxygenases ausB and ausC, and the dioxygenase ausE. Acid-catalyzed keto-rearrangement and ring contraction of the tetraketide portion of preaustinoid A3 by ausJ lead to the formation of preaustinoid A4. The aldo-keto reductase ausK, with the help of ausH, is involved in the next step by transforming preaustinoid A4 into isoaustinone which is in turn hydroxylated by the P450 monooxygenase ausI to form austinolide. The cytochrome P450 monooxygenase ausG modifies austinolide to austinol. Austinol is further acetylated to austin by the O-acetyltransferase ausP, which spontaneously changes to dehydroaustin. The cytochrome P450 monooxygenase ausR then converts dehydroaustin is into 7-dehydrodehydroaustin. The hydroxylation catalyzed by ausR permits the O-acetyltransferase ausQ to add an additional acetyl group to the molecule, leading to the formation of acetoxydehydroaustin. The short chain dehydrogenase ausT catalyzes the reduction of the double bond present between carbon atoms 1 and 2 to convert 7-dehydrodehydroaustin into 1,2-dihydro-7-hydroxydehydroaustin. AusQ catalyzes not only an acetylation reaction but also the addition of the PKS ausV diketide product to 1,2-dihydro-7-hydroxydehydroaustin, forming precalidodehydroaustin. Finally, the iron/alpha-ketoglutarate-dependent dioxygenase converts precalidodehydroaustin into calidodehydroaustin. This Aspergillus calidoustus protein is FAD-binding monooxygenase ausB.